The sequence spans 45 residues: Large ribosomal subunit protein bL34 (45 aa).

Residues 1–45 (MTKRTFGGTSRKRKRVSGFRVRMRTHTGRSVIRSRRKKGRSRIAV) are disordered. A compositionally biased stretch (basic residues) spans 10 to 45 (SRKRKRVSGFRVRMRTHTGRSVIRSRRKKGRSRIAV).

The protein belongs to the bacterial ribosomal protein bL34 family.

This chain is Large ribosomal subunit protein bL34, found in Prochlorococcus marinus (strain SARG / CCMP1375 / SS120).